A 202-amino-acid polypeptide reads, in one-letter code: FMN-dependent NADH:quinone oxidoreductase (202 aa).

Residues Ser9, 15-17 (SAS), 95-98 (MYNF), and 139-142 (TSGG) each bind FMN.

This sequence belongs to the azoreductase type 1 family. Homodimer. FMN is required as a cofactor.

The catalysed reaction is 2 a quinone + NADH + H(+) = 2 a 1,4-benzosemiquinone + NAD(+). It catalyses the reaction N,N-dimethyl-1,4-phenylenediamine + anthranilate + 2 NAD(+) = 2-(4-dimethylaminophenyl)diazenylbenzoate + 2 NADH + 2 H(+). Its function is as follows. Quinone reductase that provides resistance to thiol-specific stress caused by electrophilic quinones. In terms of biological role, also exhibits azoreductase activity. Catalyzes the reductive cleavage of the azo bond in aromatic azo compounds to the corresponding amines. This is FMN-dependent NADH:quinone oxidoreductase from Pseudomonas savastanoi pv. phaseolicola (strain 1448A / Race 6) (Pseudomonas syringae pv. phaseolicola (strain 1448A / Race 6)).